Reading from the N-terminus, the 505-residue chain is Deoxyguanosinetriphosphate triphosphohydrolase (505 aa).

An HD domain is found at 66-273; the sequence is RLTHSMEVQQ…MEAADDISYC (208 aa).

This sequence belongs to the dGTPase family. Type 1 subfamily. Homotetramer. Requires Mg(2+) as cofactor.

It catalyses the reaction dGTP + H2O = 2'-deoxyguanosine + triphosphate + H(+). Its function is as follows. dGTPase preferentially hydrolyzes dGTP over the other canonical NTPs. This chain is Deoxyguanosinetriphosphate triphosphohydrolase, found in Escherichia coli O127:H6 (strain E2348/69 / EPEC).